The following is a 179-amino-acid chain: Acireductone dioxygenase (179 aa).

The disordered stretch occupies residues Met1–Asp23. Positions 88, 90, 94, and 133 each coordinate Fe(2+). His88, His90, Glu94, and His133 together coordinate Ni(2+).

It belongs to the acireductone dioxygenase (ARD) family. Monomer. Interacts with MMP14. Requires Fe(2+) as cofactor. Ni(2+) serves as cofactor. Detected in prostate, liver, heart, brain, muscle, kidney and seminal vesicles.

It localises to the cytoplasm. The protein localises to the nucleus. Its subcellular location is the cell membrane. The enzyme catalyses 1,2-dihydroxy-5-(methylsulfanyl)pent-1-en-3-one + O2 = 4-methylsulfanyl-2-oxobutanoate + formate + 2 H(+). It catalyses the reaction 1,2-dihydroxy-5-(methylsulfanyl)pent-1-en-3-one + O2 = 3-(methylsulfanyl)propanoate + CO + formate + 2 H(+). Its pathway is amino-acid biosynthesis; L-methionine biosynthesis via salvage pathway; L-methionine from S-methyl-5-thio-alpha-D-ribose 1-phosphate: step 5/6. Its function is as follows. Catalyzes 2 different reactions between oxygen and the acireductone 1,2-dihydroxy-3-keto-5-methylthiopentene (DHK-MTPene) depending upon the metal bound in the active site. Fe-containing acireductone dioxygenase (Fe-ARD) produces formate and 2-keto-4-methylthiobutyrate (KMTB), the alpha-ketoacid precursor of methionine in the methionine recycle pathway. Ni-containing acireductone dioxygenase (Ni-ARD) produces methylthiopropionate, carbon monoxide and formate, and does not lie on the methionine recycle pathway. Also down-regulates cell migration mediated by MMP14. This is Acireductone dioxygenase (Adi1) from Rattus norvegicus (Rat).